The chain runs to 1582 residues: Mediator of RNA polymerase II transcription subunit 12 (1582 aa).

Disordered regions lie at residues M1–L114, P146–T189, and S1479–T1512. The span at A83–S100 shows a compositional bias: polar residues. A compositionally biased stretch (low complexity) spans S1479–S1493. Residues P1499–T1512 show a composition bias toward polar residues.

It belongs to the Mediator complex subunit 12 family. As to quaternary structure, component of the srb8-11 complex, which itself associates with the Mediator complex.

The protein localises to the nucleus. Its function is as follows. Component of the srb8-11 complex. The srb8-11 complex is a regulatory module of the Mediator complex which is itself involved in regulation of basal and activated RNA polymerase II-dependent transcription. The srb8-11 complex may be involved in the transcriptional repression of a subset of genes regulated by Mediator. It may inhibit the association of the Mediator complex with RNA polymerase II to form the holoenzyme complex. The chain is Mediator of RNA polymerase II transcription subunit 12 (srb8) from Emericella nidulans (strain FGSC A4 / ATCC 38163 / CBS 112.46 / NRRL 194 / M139) (Aspergillus nidulans).